The primary structure comprises 468 residues: Membrane-associated tyrosine- and threonine-specific cdc2-inhibitory kinase wee-1.1 (468 aa).

A compositionally biased stretch (basic and acidic residues) spans 25–42 (SKDEPNKLNTSRKLEVTT). The disordered stretch occupies residues 25–63 (SKDEPNKLNTSRKLEVTTKKNQSNNKKRPPPINKARKSL). The segment covering 49–61 (NKKRPPPINKARK) has biased composition (basic residues). Residues 106-357 (FNFDKNLGKG…SELMKNHVVK (252 aa)) enclose the Protein kinase domain. Residues 112–120 (LGKGSFGEV) and Lys-135 contribute to the ATP site. Asp-224 functions as the Proton acceptor in the catalytic mechanism. Residues Asn-229 and Asp-242 each coordinate Mg(2+). The segment at 425 to 453 (EDEYEVFSPPRTPVKKSRYQQTMPEVSPP) is disordered.

Belongs to the protein kinase superfamily. Ser/Thr protein kinase family. WEE1 subfamily. In the 12-13-cell embryo, expressed in the E blastomere. In the 16-cell embryo, expressed in the eight AB cells.

It is found in the nucleus. The enzyme catalyses L-seryl-[protein] + ATP = O-phospho-L-seryl-[protein] + ADP + H(+). The catalysed reaction is L-threonyl-[protein] + ATP = O-phospho-L-threonyl-[protein] + ADP + H(+). Acts as a negative regulator of entry into mitosis (G2 to M transition) by phosphorylation of the CDK1 kinase. The polypeptide is Membrane-associated tyrosine- and threonine-specific cdc2-inhibitory kinase wee-1.1 (wee-1.1) (Caenorhabditis elegans).